A 129-amino-acid polypeptide reads, in one-letter code: Lysozyme C (129 aa).

The C-type lysozyme domain occupies 1–129; the sequence is KVYGRCELAA…VHAWIRGCRL (129 aa). Disulfide bonds link C6-C127, C30-C115, C64-C80, and C76-C94. Active-site residues include E35 and D52.

It belongs to the glycosyl hydrolase 22 family. In terms of assembly, monomer.

The protein resides in the secreted. It catalyses the reaction Hydrolysis of (1-&gt;4)-beta-linkages between N-acetylmuramic acid and N-acetyl-D-glucosamine residues in a peptidoglycan and between N-acetyl-D-glucosamine residues in chitodextrins.. Lysozymes have primarily a bacteriolytic function; those in tissues and body fluids are associated with the monocyte-macrophage system and enhance the activity of immunoagents. This is Lysozyme C (LYZ) from Lophophorus impejanus (Himalayan monal pheasant).